The following is a 387-amino-acid chain: Probable WRKY transcription factor 36 (387 aa).

Residues 197–264 (CEDPSINDGC…YEGNHDHPLP (68 aa)) constitute a DNA-binding region (WRKY). The tract at residues 322–366 (RPNYPNQLPDDYPLSSSSFSLNFSSPDPPPPSSHDHTLNFSGLRT) is disordered. Over residues 329–346 (LPDDYPLSSSSFSLNFSS) the composition is skewed to low complexity.

The protein resides in the nucleus. In terms of biological role, transcription factor. Interacts specifically with the W box (5'-(T)TGAC[CT]-3'), a frequently occurring elicitor-responsive cis-acting element. This Arabidopsis thaliana (Mouse-ear cress) protein is Probable WRKY transcription factor 36 (WRKY36).